Consider the following 379-residue polypeptide: Probable homogentisate phytyltransferase 2, chloroplastic (379 aa).

The segment at 1–39 (MASLASPPLPCRAAATASRSGRPAPRLLGPPPPPASPLL) is disordered. The N-terminal 65 residues, 1-65 (MASLASPPLP…WSRRDAVRVC (65 aa)), are a transit peptide targeting the chloroplast. The next 8 helical transmembrane spans lie at 121 to 141 (WLVF…GYIV), 174 to 194 (LVVL…GPFI), 195 to 215 (TSLY…PFRL), 220 to 240 (VAAF…GVYY), 252 to 272 (WSSP…VIAI), 299 to 319 (IAFL…AVAF), 328 to 348 (TVMV…TWVL), and 361 to 378 (YYRF…FFPL).

The protein belongs to the UbiA prenyltransferase family.

It is found in the plastid. Its subcellular location is the chloroplast thylakoid membrane. It catalyses the reaction phytyl diphosphate + homogentisate + H(+) = 2-methyl-6-phytyl-1,4-benzene-1,4-diol + CO2 + diphosphate. It participates in cofactor biosynthesis; tocopherol biosynthesis. Functionally, involved in the synthesis of tocopherol (vitamin E). Catalyzes the condensation of homogentisate and phytyl diphosphate to form dimethylphytylhydrquinone. The protein is Probable homogentisate phytyltransferase 2, chloroplastic (HPT2) of Oryza sativa subsp. japonica (Rice).